The following is a 341-amino-acid chain: LRP2-binding protein (341 aa).

The stretch at 56–89 (VQANFLLGQLFFEEGWYEDALLQFEKVKDEDNQA) is one TPR repeat. Sel1-like repeat units lie at residues 90–122 (LYQAGVMYYDGLGTQEDHRKGVKYMERIVTSDC), 130–165 (YAAAYNLGRAYFEGYGIPHSDKEAERWWLFAADNGN), 170–203 (LKAQSVLGMYYSSPPNVDLQKAFLWHSEACGNGS), 204–239 (LESQGALGVMYLYGNGIKKNVQAAIECLKEAAERGN), 240–271 (VYAQGHLVSCYYQRKLYTKAVELAKKIVSHDN), and 291–326 (AIATFYFARCLHLGLGIKQDSTAAKQLYSKAAQLDA).

Its subcellular location is the cytoplasm. In terms of biological role, may act as an adapter that regulates LRP2 function. The polypeptide is LRP2-binding protein (lrp2bp) (Xenopus laevis (African clawed frog)).